The chain runs to 414 residues: Arginine deiminase (414 aa).

Cys402 functions as the Amidino-cysteine intermediate in the catalytic mechanism.

It belongs to the arginine deiminase family.

It is found in the cytoplasm. The catalysed reaction is L-arginine + H2O = L-citrulline + NH4(+). Its pathway is amino-acid degradation; L-arginine degradation via ADI pathway; carbamoyl phosphate from L-arginine: step 1/2. The chain is Arginine deiminase from Oenococcus oeni (strain ATCC BAA-331 / PSU-1).